The following is a 184-amino-acid chain: Large ribosomal subunit protein uL5 (184 aa).

The protein belongs to the universal ribosomal protein uL5 family. As to quaternary structure, part of the 50S ribosomal subunit; part of the 5S rRNA/L5/L18/L25 subcomplex. Contacts the 5S rRNA and the P site tRNA. Forms a bridge to the 30S subunit in the 70S ribosome.

Functionally, this is one of the proteins that bind and probably mediate the attachment of the 5S RNA into the large ribosomal subunit, where it forms part of the central protuberance. In the 70S ribosome it contacts protein S13 of the 30S subunit (bridge B1b), connecting the 2 subunits; this bridge is implicated in subunit movement. Contacts the P site tRNA; the 5S rRNA and some of its associated proteins might help stabilize positioning of ribosome-bound tRNAs. In Agrobacterium fabrum (strain C58 / ATCC 33970) (Agrobacterium tumefaciens (strain C58)), this protein is Large ribosomal subunit protein uL5.